Consider the following 251-residue polypeptide: Phosphomannomutase (251 aa).

Asp18 serves as the catalytic Nucleophile. Residues Asp18 and Asp20 each contribute to the Mg(2+) site. The Proton donor/acceptor role is filled by Asp20. Positions 27, 129, 140, 147, 185, and 187 each coordinate alpha-D-mannose 1-phosphate. Asp213, Phe225, Asp227, and Thr230 together coordinate Mg(2+).

The protein belongs to the eukaryotic PMM family. As to quaternary structure, homodimer. Mg(2+) is required as a cofactor.

It is found in the cytoplasm. The enzyme catalyses alpha-D-mannose 1-phosphate = D-mannose 6-phosphate. The protein operates within nucleotide-sugar biosynthesis; GDP-alpha-D-mannose biosynthesis; alpha-D-mannose 1-phosphate from D-fructose 6-phosphate: step 2/2. Catalyzes the interconversion of mannose-6-phosphate to mannose-1-phosphate, the precursor for the synthesis of GDP-mannose. GDP-mannose is an essential sugar nucleotide for the synthesis of D-mannose-containing cell wall polysaccharides (galactomannans and glucomannans), glycolipids, glycoproteins and the antioxidant L-ascorbate. This is Phosphomannomutase from Galdieria sulphuraria (Red alga).